Here is a 156-residue protein sequence, read N- to C-terminus: Endoribonuclease YbeY (156 aa).

Residues His117, His121, and His127 each coordinate Zn(2+).

This sequence belongs to the endoribonuclease YbeY family. The cofactor is Zn(2+).

It localises to the cytoplasm. Functionally, single strand-specific metallo-endoribonuclease involved in late-stage 70S ribosome quality control and in maturation of the 3' terminus of the 16S rRNA. In Shewanella frigidimarina (strain NCIMB 400), this protein is Endoribonuclease YbeY.